A 115-amino-acid chain; its full sequence is Large ribosomal subunit protein bL19 (115 aa).

Belongs to the bacterial ribosomal protein bL19 family.

Its function is as follows. This protein is located at the 30S-50S ribosomal subunit interface and may play a role in the structure and function of the aminoacyl-tRNA binding site. This is Large ribosomal subunit protein bL19 from Nitratidesulfovibrio vulgaris (strain ATCC 29579 / DSM 644 / CCUG 34227 / NCIMB 8303 / VKM B-1760 / Hildenborough) (Desulfovibrio vulgaris).